The chain runs to 966 residues: Alanine--tRNA ligase, cytoplasmic (966 aa).

Zn(2+) contacts are provided by histidine 604, histidine 608, cysteine 723, and histidine 727.

This sequence belongs to the class-II aminoacyl-tRNA synthetase family. As to quaternary structure, monomer. Requires Zn(2+) as cofactor.

It localises to the cytoplasm. It catalyses the reaction tRNA(Ala) + L-alanine + ATP = L-alanyl-tRNA(Ala) + AMP + diphosphate. Functionally, catalyzes the attachment of alanine to tRNA(Ala) in a two-step reaction: alanine is first activated by ATP to form Ala-AMP and then transferred to the acceptor end of tRNA(Ala). Also edits incorrectly charged tRNA(Ala) via its editing domain. The protein is Alanine--tRNA ligase, cytoplasmic of Drosophila melanogaster (Fruit fly).